The sequence spans 477 residues: Peptidyl-prolyl cis-trans isomerase FKBP53 (477 aa).

Disordered regions lie at residues 104 to 135 (DYEH…EDEQ) and 153 to 366 (AAAP…QVRT). Residues 264-274 (KSKKKKNQKEK) are compositionally biased toward basic residues. Positions 299 to 321 (ISQISSNTKAQDGTANNAMSESS) are enriched in polar residues. Positions 322–331 (KTPDKSAEKK) are enriched in basic and acidic residues. A compositionally biased stretch (polar residues) spans 351 to 366 (VEKQTPADSKSSQVRT). The 89-residue stretch at 389-477 (GKTVSVRYIG…TFDVELINVQ (89 aa)) folds into the PPIase FKBP-type domain.

This sequence belongs to the FKBP-type PPIase family. Interacts with histone H3. Broadly expressed in leaves, flowers, stems and roots. Detected in root apical meristem region and pollen.

The protein localises to the nucleus. The catalysed reaction is [protein]-peptidylproline (omega=180) = [protein]-peptidylproline (omega=0). In terms of biological role, PPIases accelerate the folding of proteins. It catalyzes the cis-trans isomerization of proline imidic peptide bonds in oligopeptides. Histone chaperone possibly involved in H3/H4 deposition to the nucleosome. Associates with 18S rDNA chromatin and negatively regulates the level of its expression. This chain is Peptidyl-prolyl cis-trans isomerase FKBP53 (FKBP53), found in Arabidopsis thaliana (Mouse-ear cress).